A 149-amino-acid chain; its full sequence is UPF0260 protein PFLU_1520 (149 aa).

Belongs to the UPF0260 family.

This is UPF0260 protein PFLU_1520 from Pseudomonas fluorescens (strain SBW25).